A 365-amino-acid chain; its full sequence is L-lactate oxidase (365 aa).

The FMN hydroxy acid dehydrogenase domain maps to 6–365 (RIPPGVWNAI…ITHDTLTPSC (360 aa)). Position 32 (Tyr32) interacts with pyruvate. Residues 85 to 87 (PVA), Ser114, and Gln135 contribute to the FMN site. Tyr137 lines the pyruvate pocket. FMN-binding residues include Thr163, Lys237, and Ser259. Pyruvate contacts are provided by His261 and Arg264. The Proton acceptor role is filled by His261. FMN is bound by residues 292 to 296 (DGGVR) and Arg316.

It belongs to the FMN-dependent alpha-hydroxy acid dehydrogenase family. In terms of assembly, homotetramer. The cofactor is FMN.

The enzyme catalyses (S)-lactate + O2 = pyruvate + H2O2. The catalysed reaction is glycolate + O2 = glyoxylate + H2O2. Functionally, catalyzes the oxidation of (S)-lactate (L-lactate) to pyruvate, with a reduction of O2 to H2O2. To a lesser extent is also able to use glycolate as substrate. This is L-lactate oxidase from Alicycliphilus denitrificans (strain DSM 14773 / CIP 107495 / K601).